A 288-amino-acid chain; its full sequence is Bifunctional protein FolD (288 aa).

NADP(+) is bound by residues 164–166 (GRS), serine 193, and isoleucine 234.

Belongs to the tetrahydrofolate dehydrogenase/cyclohydrolase family. Homodimer.

It carries out the reaction (6R)-5,10-methylene-5,6,7,8-tetrahydrofolate + NADP(+) = (6R)-5,10-methenyltetrahydrofolate + NADPH. It catalyses the reaction (6R)-5,10-methenyltetrahydrofolate + H2O = (6R)-10-formyltetrahydrofolate + H(+). Its pathway is one-carbon metabolism; tetrahydrofolate interconversion. Functionally, catalyzes the oxidation of 5,10-methylenetetrahydrofolate to 5,10-methenyltetrahydrofolate and then the hydrolysis of 5,10-methenyltetrahydrofolate to 10-formyltetrahydrofolate. This is Bifunctional protein FolD from Nitratidesulfovibrio vulgaris (strain DSM 19637 / Miyazaki F) (Desulfovibrio vulgaris).